A 633-amino-acid chain; its full sequence is Extracellular metalloproteinase 3 (633 aa).

A signal peptide spans 1-18 (MHGLLLAGLLALPMNVLA). Positions 19–246 (HPAEQQTSSV…VHNVVDYVAS (228 aa)) are excised as a propeptide. N-linked (GlcNAc...) asparagine glycosylation is present at Asn-410. His-429 contributes to the Zn(2+) binding site. Glu-430 is an active-site residue. His-433 contacts Zn(2+). N-linked (GlcNAc...) asparagine glycosylation occurs at Asn-480.

It belongs to the peptidase M36 family. Zn(2+) is required as a cofactor.

The protein localises to the secreted. Its function is as follows. Secreted metalloproteinase probably acting as a virulence factor. This Arthroderma otae (Microsporum canis) protein is Extracellular metalloproteinase 3 (MEP3).